A 485-amino-acid polypeptide reads, in one-letter code: Probable trichothecene esterase SAT6 (485 aa).

Residues Met-1–Val-23 are disordered. Residues Leu-9 to Val-23 show a composition bias toward low complexity. Catalysis depends on charge relay system residues Ser-262, Asp-406, and His-438.

The protein belongs to the AB hydrolase superfamily. Lipase family.

Its pathway is mycotoxin biosynthesis. Its function is as follows. Probable trichothecene esterase; part of the satratoxin SC1 cluster involved in the biosynthesis of satratoxins, trichothecene mycotoxins that are associated with human food poisonings. Satratoxins are suggested to be made by products of multiple gene clusters (SC1, SC2 and SC3) that encode 21 proteins in all, including polyketide synthases, acetyltransferases, and other enzymes expected to modify the trichothecene skeleton. SC1 encodes 10 proteins, SAT1 to SAT10. The largest are SAT8, which encodes a putative polyketide synthase (PKS) with a conventional non-reducing architecture, and SAT10, a putative protein containing four ankyrin repeats and thus may be involved in protein scaffolding. The putative short-chain reductase SAT3 may assist the PKS in some capacity. SAT6 contains a secretory lipase domain and acts probably as a trichothecene esterase. SAT5 encodes a putative acetyltransferase, and so, with SAT6, may affect endogenous protection from toxicity. The probable transcription factor SAT9 may regulate the expression of the SC1 cluster. SC2 encodes proteins SAT11 to SAT16, the largest of which encodes the putative reducing PKS SAT13. SAT11 is a cytochrome P450 monooxygenase, while SAT14 and SAT16 are probable acetyltransferases. The SC2 cluster may be regulated by the transcription factor SAT15. SC3 is a small cluster that encodes 5 proteins, SAT17 to SAT21. SAT21 is a putative MFS-type transporter which may have a role in exporting secondary metabolites. The four other proteins putatively encoded in SC3 include the taurine hydroxylase-like protein SAT17, the O-methyltransferase SAT18, the acetyltransferase SAT19, and the Cys6-type zinc finger SAT20, the latter being probably involved in regulation of SC3 expression. The protein is Probable trichothecene esterase SAT6 of Stachybotrys chartarum (strain CBS 109288 / IBT 7711) (Toxic black mold).